The following is a 250-amino-acid chain: MMKILISNDDGVNAIGIVALTRSLSQIAETLTVGPDRNCSGASNSLTLTNPLRLNTLDNGFISVSGTPTDCVHLAIRELYQDEPDMVVSGINAGANMGDDTLYSGTVAAAMEGRFLGFPAIAISLVGHEHYETAAHYALKIVKALQDNPVAQDKILNINVPDLPLSEVKGMKITRLGARHRAEGMVRTQDPAGKEIFWLGPPGDEQDASDGTDFHAVANGYVSITPLTVDLTAFEQLKALDNWLANISEK.

Asp9, Asp10, Ser40, and Asn92 together coordinate a divalent metal cation.

The protein belongs to the SurE nucleotidase family. The cofactor is a divalent metal cation.

The protein resides in the cytoplasm. It catalyses the reaction a ribonucleoside 5'-phosphate + H2O = a ribonucleoside + phosphate. Nucleotidase that shows phosphatase activity on nucleoside 5'-monophosphates. In Shewanella pealeana (strain ATCC 700345 / ANG-SQ1), this protein is 5'-nucleotidase SurE.